Reading from the N-terminus, the 248-residue chain is Probable transcriptional regulatory protein PFL_4766 (248 aa).

This sequence belongs to the TACO1 family.

The protein resides in the cytoplasm. This chain is Probable transcriptional regulatory protein PFL_4766, found in Pseudomonas fluorescens (strain ATCC BAA-477 / NRRL B-23932 / Pf-5).